The following is a 400-amino-acid chain: Nicotinate phosphoribosyltransferase (400 aa).

A Phosphohistidine; by autocatalysis modification is found at His220.

This sequence belongs to the NAPRTase family. Post-translationally, transiently phosphorylated on a His residue during the reaction cycle. Phosphorylation strongly increases the affinity for substrates and increases the rate of nicotinate D-ribonucleotide production. Dephosphorylation regenerates the low-affinity form of the enzyme, leading to product release.

It catalyses the reaction nicotinate + 5-phospho-alpha-D-ribose 1-diphosphate + ATP + H2O = nicotinate beta-D-ribonucleotide + ADP + phosphate + diphosphate. The protein operates within cofactor biosynthesis; NAD(+) biosynthesis; nicotinate D-ribonucleotide from nicotinate: step 1/1. Catalyzes the synthesis of beta-nicotinate D-ribonucleotide from nicotinate and 5-phospho-D-ribose 1-phosphate at the expense of ATP. This Salmonella typhi protein is Nicotinate phosphoribosyltransferase.